The chain runs to 585 residues: ATP-dependent RNA helicase DBP3 (585 aa).

Residues 1–124 (MTTSATEKAL…SSSASAASFT (124 aa)) form a disordered region. A compositionally biased stretch (low complexity) spans 26-43 (AKAAAAAGASASTSLEGS). 2 stretches are compositionally biased toward basic residues: residues 52-64 (KDKKDKKDKKDKK) and 79-93 (AKKRRKEEKKAKKAA). Over residues 94-124 (AKSGAATSLESTPAASPAPAASSSASAASFT) the composition is skewed to low complexity. The short motif at 159–187 (FRELDGKVDAAVKKTLDSQGFSTPTPIQA) is the Q motif element. One can recognise a Helicase ATP-binding domain in the interval 190 to 377 (WPVLLQNKDV…ESFMNGPVRV (188 aa)). 203-210 (AETGSGKT) contributes to the ATP binding site. The DEAD box motif lies at 322-325 (DEAD). Residues 406–554 (RLNDFLRSVN…KVPDALTKFP (149 aa)) enclose the Helicase C-terminal domain.

This sequence belongs to the DEAD box helicase family. DDX5/DBP2 subfamily.

It localises to the nucleus. It is found in the nucleolus. The catalysed reaction is ATP + H2O = ADP + phosphate + H(+). ATP-dependent RNA helicase required for 60S ribosomal subunit synthesis. Involved in efficient pre-rRNA processing, predominantly at site A3, which is necessary for the normal formation of 25S and 5.8S rRNAs. In Mycosarcoma maydis (Corn smut fungus), this protein is ATP-dependent RNA helicase DBP3 (DBP3).